A 180-amino-acid chain; its full sequence is Adenine phosphoribosyltransferase (180 aa).

Belongs to the purine/pyrimidine phosphoribosyltransferase family. Homodimer.

It localises to the cytoplasm. The enzyme catalyses AMP + diphosphate = 5-phospho-alpha-D-ribose 1-diphosphate + adenine. Its pathway is purine metabolism; AMP biosynthesis via salvage pathway; AMP from adenine: step 1/1. In terms of biological role, catalyzes a salvage reaction resulting in the formation of AMP, that is energically less costly than de novo synthesis. This is Adenine phosphoribosyltransferase from Marinomonas sp. (strain MWYL1).